The chain runs to 353 residues: Interferon-stimulated 20 kDa exonuclease-like 2 (353 aa).

Disordered regions lie at residues 1–93 (MSTL…QPLD) and 125–172 (ALPK…SGAS). Positions 14–23 (PPKKALEGNA) are enriched in basic and acidic residues. A compositionally biased stretch (basic residues) spans 24 to 35 (KHRNFVKKRRLL). A compositionally biased stretch (basic and acidic residues) spans 54–63 (LHSEPSKKGE). Basic residues predominate over residues 135 to 151 (RSQKKSSQKKSSKKNHP). The segment covering 152–172 (QKNAPQNSTQAHSENKCSGAS) has biased composition (polar residues). Residues 178–353 (KMVAIDCEMV…EHLARNPPTD (176 aa)) enclose the Exonuclease domain.

The protein localises to the nucleus. Its subcellular location is the nucleolus. Its function is as follows. 3'-&gt; 5'-exoribonuclease involved in ribosome biogenesis in the processing of the 12S pre-rRNA. Displays a strong specificity for a 3'-end containing a free hydroxyl group. The polypeptide is Interferon-stimulated 20 kDa exonuclease-like 2 (ISG20L2) (Homo sapiens (Human)).